We begin with the raw amino-acid sequence, 620 residues long: Cilia- and flagella-associated protein 52 (620 aa).

WD repeat units follow at residues 62–106 (GHSN…LMAR), 109–150 (LHKG…AICG), 156–195 (LNVGNATSVVFSQCHDEMFVTAGNGTIRVWELDLPNRKIW), 203–242 (QMKRIVMSISMASDDSFFYLGTTTGDILKMNPRTKLLADT), 288–327 (QLQGGITSISLRGEGHQFFVGTEESHIYRVNFTDFKETLV), 330–369 (CHFEAVEDVVFPFGTAELFATCAKKDIRVWHTLSNRELLR), 372–411 (VPNMTCHGIDFMRDGKSLISAWDDGKIRAFAPETGRLMYV), 415–454 (AHRIGVTAVATTSDCTRVISGGGEGEVRVWQIGHQTQKLE), 459–498 (EHKSSVSCIRVKKNNEECVTASTDGTCIIWDLVRLRRNQM), 500–539 (LANTLFQCVCYHPEEFQIITSGTDRKIAYWEVFDGSGIRE), 543–582 (SLSGSINGMDITPEGVHFVTGGNDHLVKVWDYNEGEVTHV), and 585–620 (GHSGNITRVRISPGNEYIVSVSADGAILRWKYPFPS).

Belongs to the CFAP52 family. Microtubule inner protein component of sperm flagellar doublet microtubules. Interacts with BRCA2. Interacts with the CCT chaperonin complex. Interacts with HSP70. Interacts with AK8. Interacts with CFAP45. Interacts with DNAI1. Interacts with IQDC. Expressed in respiratory cells and sperm (at protein level).

It localises to the cytoplasm. The protein resides in the cytoskeleton. It is found in the cilium axoneme. The protein localises to the flagellum axoneme. Microtubule inner protein (MIP) part of the dynein-decorated doublet microtubules (DMTs) in cilia axoneme. Important for proper ciliary and flagellar beating. May act in cooperation with CFAP45 and axonemal dynein subunit DNAH11. May play a role in cell growth and/or survival. The sequence is that of Cilia- and flagella-associated protein 52 (CFAP52) from Sus scrofa (Pig).